Consider the following 376-residue polypeptide: Light-dependent chlorophyll f synthase (376 aa).

The tract at residues 1 to 22 (MKLESDHVIATSDSSDYTSEPT) is disordered. The span at 11 to 22 (TSDSSDYTSEPT) shows a compositional bias: polar residues. The next 5 membrane-spanning stretches (helical) occupy residues 51-68 (YVGW…TAAT), 140-155 (HFLI…EWEL), 164-178 (WISL…ASVS), 219-240 (LHQL…HGSL), and 298-312 (FLAA…SAAL). H140 serves as a coordination point for a chlorophyll. H220 provides a ligand contact to a chlorophyll.

This sequence belongs to the reaction center PufL/M/PsbA/D family. As to quaternary structure, homodimer.

The protein localises to the cellular thylakoid membrane. Synthesizes chlorophyll f or chlorophyllide f (Chl f, 2-formyl chlorophyll a), probably by oxidation of chlorophyll a or chlorophyllide a and reduction of plastoquinone. The reaction is probably light-dependent. Chl f absorbs far red light (FRL, 707 nm in 100% methanol), and is synthesized when cells are grown in FRL, where it provides the advantage of extending the spectral range of harvested light in terrestrial cyanobacteria. When ectopically expressed in Synechococcus PCC 7002 (which does not grow in FRL and does not make Chl f) produces Chl f (0.059% of total chlorophyll). The sequence is that of Light-dependent chlorophyll f synthase from Chlorogloeopsis fritschii (strain PCC 9212).